The sequence spans 447 residues: GTPase Der (447 aa).

2 consecutive EngA-type G domains span residues 4 to 165 and 180 to 357; these read QIIT…PEEE and LQIV…KIWN. Residues 10–17, 57–61, 119–122, 186–193, 233–237, and 298–301 contribute to the GTP site; these read GRPNVGKS, DTPGL, NKCE, GRPNAGKS, DTAGL, and NKWD. The region spanning 358–443 is the KH-like domain; sequence KKITTSKLNE…PIRFTYVKTK (86 aa).

The protein belongs to the TRAFAC class TrmE-Era-EngA-EngB-Septin-like GTPase superfamily. EngA (Der) GTPase family. Associates with the 50S ribosomal subunit.

Its function is as follows. GTPase that plays an essential role in the late steps of ribosome biogenesis. This chain is GTPase Der, found in Rickettsia rickettsii (strain Iowa).